The primary structure comprises 101 residues: Ribonuclease kappa-A (101 aa).

Transmembrane regions (helical) follow at residues 13 to 33 (ACGI…GVFF) and 68 to 88 (VSYN…FSFC).

The protein belongs to the RNase K family.

The protein localises to the membrane. Functionally, endoribonuclease which preferentially cleaves ApU and ApG phosphodiester bonds. The protein is Ribonuclease kappa-A (rnasek-a) of Xenopus laevis (African clawed frog).